The primary structure comprises 255 residues: F-box/SPRY domain-containing protein 1 (255 aa).

One can recognise an F-box domain in the interval aspartate 3–histidine 51. Positions leucine 61–leucine 253 constitute a B30.2/SPRY domain.

Belongs to the FBXO45/Fsn family. In terms of assembly, component of an E3 ubiquitin ligase complex composed of hiw and Fsn.

Its subcellular location is the synapse. Its pathway is protein modification; protein ubiquitination. Its function is as follows. Required in the presynaptic motoneuron to down-regulate the levels of wnd and restrain synaptic terminal growth at the neuromuscular junction (NMJ). In Drosophila simulans (Fruit fly), this protein is F-box/SPRY domain-containing protein 1.